Here is a 334-residue protein sequence, read N- to C-terminus: Porphobilinogen deaminase (334 aa).

Cys255 carries the post-translational modification S-(dipyrrolylmethanemethyl)cysteine.

The protein belongs to the HMBS family. As to quaternary structure, monomer. The cofactor is dipyrromethane.

It carries out the reaction 4 porphobilinogen + H2O = hydroxymethylbilane + 4 NH4(+). It functions in the pathway porphyrin-containing compound metabolism; protoporphyrin-IX biosynthesis; coproporphyrinogen-III from 5-aminolevulinate: step 2/4. In terms of biological role, tetrapolymerization of the monopyrrole PBG into the hydroxymethylbilane pre-uroporphyrinogen in several discrete steps. The protein is Porphobilinogen deaminase of Burkholderia orbicola (strain MC0-3).